A 617-amino-acid polypeptide reads, in one-letter code: Putative type VI secretion system protein VgrGB (617 aa).

Residues 449-469 (RTFHATNPSPYPLPASKTRTS) form a disordered region.

The protein belongs to the VgrG protein family.

Its function is as follows. A Vgr protein that is probably part of a type VI secretion system (T6SS). May be required for export of proteins involved in Rhs-mediated cellular contact-dependent growth inhibition (CDI). The sequence is that of Putative type VI secretion system protein VgrGB (vgrGB) from Dickeya dadantii (strain 3937) (Erwinia chrysanthemi (strain 3937)).